We begin with the raw amino-acid sequence, 350 residues long: Dihydroorotate dehydrogenase (quinone) (350 aa).

Residues 67–71 and glycine 91 each bind FMN; that span reads AGFDK. Lysine 71 lines the substrate pocket. 116–120 is a binding site for substrate; that stretch reads NRMGL. Residues asparagine 144 and asparagine 177 each coordinate FMN. Substrate is bound at residue asparagine 177. The active-site Nucleophile is the cysteine 180. Asparagine 182 contacts substrate. Residues lysine 213 and threonine 241 each coordinate FMN. 242-243 serves as a coordination point for substrate; the sequence is NT. The interval 245-265 is disordered; sequence TERPASLRSPNAVETGGLSGK. Residues glycine 264, glycine 291, and 312–313 contribute to the FMN site; that span reads YT.

The protein belongs to the dihydroorotate dehydrogenase family. Type 2 subfamily. In terms of assembly, monomer. FMN serves as cofactor.

The protein resides in the cell membrane. It catalyses the reaction (S)-dihydroorotate + a quinone = orotate + a quinol. It functions in the pathway pyrimidine metabolism; UMP biosynthesis via de novo pathway; orotate from (S)-dihydroorotate (quinone route): step 1/1. Its function is as follows. Catalyzes the conversion of dihydroorotate to orotate with quinone as electron acceptor. The chain is Dihydroorotate dehydrogenase (quinone) (pyrD) from Haloarcula marismortui (strain ATCC 43049 / DSM 3752 / JCM 8966 / VKM B-1809) (Halobacterium marismortui).